A 269-amino-acid chain; its full sequence is Formamidopyrimidine-DNA glycosylase (269 aa).

Residue P2 is the Schiff-base intermediate with DNA of the active site. The active-site Proton donor is E3. K57 acts as the Proton donor; for beta-elimination activity in catalysis. H90, R109, and K150 together coordinate DNA. The segment at 235-269 (QVYGRKGEPCRVCGTPIAATKHAQRATFYCRHCQK) adopts an FPG-type zinc-finger fold. Catalysis depends on R259, which acts as the Proton donor; for delta-elimination activity.

This sequence belongs to the FPG family. As to quaternary structure, monomer. Zn(2+) is required as a cofactor.

The enzyme catalyses Hydrolysis of DNA containing ring-opened 7-methylguanine residues, releasing 2,6-diamino-4-hydroxy-5-(N-methyl)formamidopyrimidine.. The catalysed reaction is 2'-deoxyribonucleotide-(2'-deoxyribose 5'-phosphate)-2'-deoxyribonucleotide-DNA = a 3'-end 2'-deoxyribonucleotide-(2,3-dehydro-2,3-deoxyribose 5'-phosphate)-DNA + a 5'-end 5'-phospho-2'-deoxyribonucleoside-DNA + H(+). Functionally, involved in base excision repair of DNA damaged by oxidation or by mutagenic agents. Acts as a DNA glycosylase that recognizes and removes damaged bases. Has a preference for oxidized purines, such as 7,8-dihydro-8-oxoguanine (8-oxoG). Has AP (apurinic/apyrimidinic) lyase activity and introduces nicks in the DNA strand. Cleaves the DNA backbone by beta-delta elimination to generate a single-strand break at the site of the removed base with both 3'- and 5'-phosphates. This is Formamidopyrimidine-DNA glycosylase from Salmonella paratyphi B (strain ATCC BAA-1250 / SPB7).